Here is a 610-residue protein sequence, read N- to C-terminus: Elongation factor 4 (610 aa).

The tr-type G domain occupies 13-195 (SHIRNFSIVA…AIVNRLPAPK (183 aa)). GTP is bound by residues 25–30 (DHGKST) and 142–145 (NKID).

It belongs to the TRAFAC class translation factor GTPase superfamily. Classic translation factor GTPase family. LepA subfamily.

It is found in the cell inner membrane. It catalyses the reaction GTP + H2O = GDP + phosphate + H(+). In terms of biological role, required for accurate and efficient protein synthesis under certain stress conditions. May act as a fidelity factor of the translation reaction, by catalyzing a one-codon backward translocation of tRNAs on improperly translocated ribosomes. Back-translocation proceeds from a post-translocation (POST) complex to a pre-translocation (PRE) complex, thus giving elongation factor G a second chance to translocate the tRNAs correctly. Binds to ribosomes in a GTP-dependent manner. This Rhizobium leguminosarum bv. trifolii (strain WSM2304) protein is Elongation factor 4.